The sequence spans 574 residues: NADH-ubiquinone oxidoreductase chain 5 (574 aa).

The next 16 membrane-spanning stretches (helical) occupy residues 10–30 (VASK…LYMV), 50–70 (MMMT…VVMI), 87–107 (FINR…MLIF), 111–131 (LIIL…LVIY), 141–161 (GMIT…AIAW), 181–203 (YQAL…SSWL), 211–231 (TPVS…FLLI), 240–260 (VWWF…MAGL), 280–300 (LGMM…FHMV), 301–321 (THAM…HSHM), 340–360 (TSCL…SGFY), 381–401 (LILF…MCVV), 423–443 (MLLL…ILPL), 458–478 (TLML…TTNM), 489–509 (IINY…QFMM), and 554–574 (TPMN…LVAI).

This sequence belongs to the complex I subunit 5 family.

The protein localises to the mitochondrion inner membrane. It catalyses the reaction a ubiquinone + NADH + 5 H(+)(in) = a ubiquinol + NAD(+) + 4 H(+)(out). Core subunit of the mitochondrial membrane respiratory chain NADH dehydrogenase (Complex I) that is believed to belong to the minimal assembly required for catalysis. Complex I functions in the transfer of electrons from NADH to the respiratory chain. The immediate electron acceptor for the enzyme is believed to be ubiquinone. This Lumbricus terrestris (Common earthworm) protein is NADH-ubiquinone oxidoreductase chain 5 (ND5).